We begin with the raw amino-acid sequence, 247 residues long: Carboxy-S-adenosyl-L-methionine synthase (247 aa).

Residues Tyr40, 65–67, 90–91, 122–123, Asn137, and Arg204 contribute to the S-adenosyl-L-methionine site; these read GAS, DN, and DI.

The protein belongs to the class I-like SAM-binding methyltransferase superfamily. Cx-SAM synthase family. As to quaternary structure, homodimer.

It carries out the reaction prephenate + S-adenosyl-L-methionine = carboxy-S-adenosyl-L-methionine + 3-phenylpyruvate + H2O. In terms of biological role, catalyzes the conversion of S-adenosyl-L-methionine (SAM) to carboxy-S-adenosyl-L-methionine (Cx-SAM). The sequence is that of Carboxy-S-adenosyl-L-methionine synthase from Pseudomonas putida (strain ATCC 700007 / DSM 6899 / JCM 31910 / BCRC 17059 / LMG 24140 / F1).